Consider the following 252-residue polypeptide: MFYGVDLTSRLMLGTAQYPSPQVLLEAIEASGAQVITVSLRREGAAGGAFRALLAKSRCRLLPNTAGCHTVREAVTTARMAREVFGTSWIKLEVIGHADTQQPDPFALVEAARVLCAEGFDVFPYTTEDLIVGEKLLEAGCKVLMPWGAPIGSGQGLRNLAGLRSMRAHFRDVPLVVDAGIGAPSQAAQAMELGFDAVLLNTAVAKAVDPVGMARAFGRAIQAGQEGFVAGLMPERDMASASTPVFGLAELA.

Lysine 91 functions as the Schiff-base intermediate with DXP in the catalytic mechanism. 1-deoxy-D-xylulose 5-phosphate contacts are provided by residues glycine 152, 179 to 180, and 201 to 202; these read AG and NT.

This sequence belongs to the ThiG family. In terms of assembly, homotetramer. Forms heterodimers with either ThiH or ThiS.

The protein localises to the cytoplasm. It carries out the reaction [ThiS sulfur-carrier protein]-C-terminal-Gly-aminoethanethioate + 2-iminoacetate + 1-deoxy-D-xylulose 5-phosphate = [ThiS sulfur-carrier protein]-C-terminal Gly-Gly + 2-[(2R,5Z)-2-carboxy-4-methylthiazol-5(2H)-ylidene]ethyl phosphate + 2 H2O + H(+). Its pathway is cofactor biosynthesis; thiamine diphosphate biosynthesis. Functionally, catalyzes the rearrangement of 1-deoxy-D-xylulose 5-phosphate (DXP) to produce the thiazole phosphate moiety of thiamine. Sulfur is provided by the thiocarboxylate moiety of the carrier protein ThiS. In vitro, sulfur can be provided by H(2)S. This is Thiazole synthase from Gluconobacter oxydans (strain 621H) (Gluconobacter suboxydans).